A 725-amino-acid polypeptide reads, in one-letter code: Manganese-exporting P-type ATPase (725 aa).

The HMA domain maps to 25–92 (GRMRIQIEWV…AISGAAHVAA (68 aa)). A run of 6 helical transmembrane segments spans residues 101-119 (HSSD…GAAA), 142-160 (LVAS…RGAL), 165-179 (TGTD…IASL), 188-202 (LAVL…YLQD), 335-359 (VGEN…AITK), and 365-383 (MTVL…TPTA). Residue Asp416 is the 4-aspartylphosphate intermediate of the active site. Residues Asp416, Thr418, and Asp618 each coordinate Mg(2+). Transmembrane regions (helical) follow at residues 669 to 688 (AVEV…AAGL) and 698 to 717 (PVLA…ANSS).

Belongs to the cation transport ATPase (P-type) (TC 3.A.3) family. Type IB subfamily.

Its subcellular location is the cell membrane. The enzyme catalyses Mn(2+)(in) + ATP + H2O = Mn(2+)(out) + ADP + phosphate + H(+). Functionally, high affinity, slow turnover Mn(2+) transporting ATPase. The chain is Manganese-exporting P-type ATPase (ctpC) from Mycobacterium leprae (strain TN).